Reading from the N-terminus, the 141-residue chain is Nucleoside triphosphatase NudI (141 aa).

In terms of domain architecture, Nudix hydrolase spans 1 to 141 (MRQRTIVCPL…RHTLALKGLL (141 aa)). The short motif at 38–59 (GGVEPGERIEEALRREVREELG) is the Nudix box element.

The protein belongs to the Nudix hydrolase family. NudI subfamily. As to quaternary structure, monomer. Mg(2+) serves as cofactor.

It carries out the reaction a ribonucleoside 5'-triphosphate + H2O = a ribonucleoside 5'-phosphate + diphosphate + H(+). The enzyme catalyses a 2'-deoxyribonucleoside 5'-triphosphate + H2O = a 2'-deoxyribonucleoside 5'-phosphate + diphosphate + H(+). The catalysed reaction is dUTP + H2O = dUMP + diphosphate + H(+). It catalyses the reaction dTTP + H2O = dTMP + diphosphate + H(+). It carries out the reaction dCTP + H2O = dCMP + diphosphate + H(+). Functionally, catalyzes the hydrolysis of nucleoside triphosphates, with a preference for pyrimidine deoxynucleoside triphosphates (dUTP, dTTP and dCTP). This Salmonella schwarzengrund (strain CVM19633) protein is Nucleoside triphosphatase NudI.